The primary structure comprises 319 residues: Sliding-clamp-loader large subunit (319 aa).

ATP contacts are provided by residues 12–15 (EQKY), isoleucine 24, 53–58 (GTGKTT), and arginine 205.

Belongs to the Tevenvirinae sliding-clamp-loader large subunit family. In terms of assembly, the sliding-clamp-loader consists of 4 large subunits and 1 small subunit. Interacts with the sliding clamp; this interaction allows the sliding-clamp-loader to open the sliding clamp. Part of the replicase complex that includes the DNA polymerase, the polymerase clamp, the clamp loader complex, the single-stranded DNA binding protein, the primase, the helicase and the helicase assembly factor.

Forms the sliding-clamp-loader together with the small subunit. Functions as an ATPase enzyme. The clamp loader holds the clamp in an open conformation and places it onto the DNA. 4 ATP molecules must bind to the sliding-clamp-loader before the latter can open the sliding clamp. ATP hydrolysis triggers the detachment of the sliding clamp from the sliding-clamp-loader, freeing the sliding clamp to track along DNA. This Enterobacteria phage T4 (Bacteriophage T4) protein is Sliding-clamp-loader large subunit (44).